Consider the following 378-residue polypeptide: MIDYEFLRFIWWVLVIVLLIGFSVTDGFDMGVTALLPVIGKKEVERRIMINTIAPHWDGNQVWLLTAGGAIFAAWPIVYAVSFSGFYIALVLVLAALFLRPLGFEYRAKIDNPTWRSVWDWGLFAGGFVPALVFGVAFGNLLQGVPFHFNELTQVTYTGSFFELLNPFALLCGVISLSMLVTHGANWLQMKTTEALRDRARTVSQIGSIVTLIAFVLAGVWLYSKDGYVVTSTIDHFAPSSPMNKEVAVETGAWFRNFNEMPILWIFPALAVVAALLNAAFSKANRCGFAFFFSALTMAGVIITAAVSMFPFVMPSSSHPEQSLLMWDSTSSELTLTLMLIFAVVFVVIALAYTIWSYSKMFGRLDANFIDKNKHSLY.

Topologically, residues 1–8 (MIDYEFLR) are cytoplasmic. The helical transmembrane segment at 9 to 28 (FIWWVLVIVLLIGFSVTDGF) threads the bilayer. Residues 29-79 (DMGVTALLPVIGKKEVERRIMINTIAPHWDGNQVWLLTAGGAIFAAWPIVY) are Periplasmic-facing. A helical transmembrane segment spans residues 80 to 99 (AVSFSGFYIALVLVLAALFL). Over 100 to 122 (RPLGFEYRAKIDNPTWRSVWDWG) the chain is Cytoplasmic. A helical transmembrane segment spans residues 123-142 (LFAGGFVPALVFGVAFGNLL). The Periplasmic segment spans residues 143 to 164 (QGVPFHFNELTQVTYTGSFFEL). Residues 165-184 (LNPFALLCGVISLSMLVTHG) form a helical membrane-spanning segment. The Cytoplasmic portion of the chain corresponds to 185–205 (ANWLQMKTTEALRDRARTVSQ). The helical transmembrane segment at 206-224 (IGSIVTLIAFVLAGVWLYS) threads the bilayer. Over 225 to 261 (KDGYVVTSTIDHFAPSSPMNKEVAVETGAWFRNFNEM) the chain is Periplasmic. A helical membrane pass occupies residues 262–281 (PILWIFPALAVVAALLNAAF). Over 282–291 (SKANRCGFAF) the chain is Cytoplasmic. Residues 292–311 (FFSALTMAGVIITAAVSMFP) traverse the membrane as a helical segment. Residues 312–335 (FVMPSSSHPEQSLLMWDSTSSELT) lie on the Periplasmic side of the membrane. Residues 336–355 (LTLMLIFAVVFVVIALAYTI) form a helical membrane-spanning segment. Residues 356–378 (WSYSKMFGRLDANFIDKNKHSLY) are Cytoplasmic-facing.

It belongs to the cytochrome ubiquinol oxidase subunit 2 family. Heterodimer of subunits I and II.

The protein localises to the cell inner membrane. Probable cytochrome oxidase subunit. This chain is Probable cytochrome oxidase subunit 2, found in Haemophilus influenzae (strain ATCC 51907 / DSM 11121 / KW20 / Rd).